A 249-amino-acid polypeptide reads, in one-letter code: Proteasome subunit alpha type-7-B (249 aa).

The protein belongs to the peptidase T1A family. As to quaternary structure, the 26S proteasome consists of a 20S proteasome core and two 19S regulatory subunits. The 20S proteasome core is composed of 28 subunits that are arranged in four stacked rings, resulting in a barrel-shaped structure. The two end rings are each formed by seven alpha subunits, and the two central rings are each formed by seven beta subunits. The catalytic chamber with the active sites is on the inside of the barrel.

The protein localises to the cytoplasm. The protein resides in the nucleus. In terms of biological role, the proteasome is a multicatalytic proteinase complex which is characterized by its ability to cleave peptides with Arg, Phe, Tyr, Leu, and Glu adjacent to the leaving group at neutral or slightly basic pH. The proteasome has an ATP-dependent proteolytic activity. This Oryza sativa subsp. indica (Rice) protein is Proteasome subunit alpha type-7-B (PAD1).